We begin with the raw amino-acid sequence, 288 residues long: MKKLSFQQIILTLQNYWQDYGCAILQPYDAYVGAGTFHPATVLRCLGTKPWSVAYVQPSRRPGDSRYGMHPNRMQHYYQFQVILKPSPDNIQELYLKSLECLGIDLKIHDIRFVEDDWESPTLGAAGLGWEVWCNGMEVSQFTYMQQIGGIECRPVAGEITYGLERLALYIQGVDEVRELDWNGQVGEKALKYGEVDFEAEWQFSKYNLELADSEMLLRHFKDSEDQCERLIKANLPMPAYDECLKASHAFNQLNALGVISVTERASYVLRVRHLARICCTKWLEMNK.

This sequence belongs to the class-II aminoacyl-tRNA synthetase family. Tetramer of two alpha and two beta subunits.

It localises to the cytoplasm. It catalyses the reaction tRNA(Gly) + glycine + ATP = glycyl-tRNA(Gly) + AMP + diphosphate. The sequence is that of Glycine--tRNA ligase alpha subunit from Rickettsia rickettsii (strain Iowa).